We begin with the raw amino-acid sequence, 293 residues long: SAGA-associated factor 29 (293 aa).

Residues Leu3–Lys88 adopt a coiled-coil conformation. An SGF29 C-terminal domain is found at Gly152–Lys293. Histone H3K4me3 N-terminus binding stretches follow at residues Asp194–Asp196 and Gln240–Cys243. A histone H3K4me3 binding region spans residues Phe264–Asp266. Lys288 is modified (N6-acetyllysine).

It belongs to the SGF29 family. As to quaternary structure, interacts with dimethylated and trimethylated 'Lys-4' of histone H3 (H3K4me2 and H3K4me3), with a preference for the trimethylated form (H3K4me3). Component of some SAGA-type complexes. Component of the ADA2A-containing complex (ATAC), composed of KAT14, KAT2A, TADA2L, TADA3L, ZZ3, MBIP, WDR5, YEATS2, CCDC101 and DR1. Interacts with (methylated) CGAS. Interacts with TADA3L, GCN5L2, SUPT3H and MYC. In terms of tissue distribution, widely expressed with highest levels in testis. Highly expressed in hepatoma and other tumor cell lines.

It localises to the nucleus. Its function is as follows. Chromatin reader component of some histone acetyltransferase (HAT) SAGA-type complexes like the TFTC-HAT, ATAC or STAGA complexes. SGF29 specifically recognizes and binds methylated 'Lys-4' of histone H3 (H3K4me), with a preference for trimethylated form (H3K4me3). In the SAGA-type complexes, SGF29 is required to recruit complexes to H3K4me. Involved in the response to endoplasmic reticulum (ER) stress by recruiting the SAGA complex to H3K4me, thereby promoting histone H3 acetylation and cell survival. Also binds non-histone proteins that are methylated on Lys residues: specifically recognizes and binds CGAS monomethylated on 'Lys-491'. May be involved in MYC-mediated oncogenic transformation. This chain is SAGA-associated factor 29, found in Rattus norvegicus (Rat).